A 150-amino-acid polypeptide reads, in one-letter code: Peptide methionine sulfoxide reductase MsrB (150 aa).

Residues 9–132 form the MsrB domain; that stretch reads EAELKRTLTK…NSAALKFIPF (124 aa). The active-site Nucleophile is the C121.

Belongs to the MsrB Met sulfoxide reductase family.

It carries out the reaction L-methionyl-[protein] + [thioredoxin]-disulfide + H2O = L-methionyl-(R)-S-oxide-[protein] + [thioredoxin]-dithiol. The sequence is that of Peptide methionine sulfoxide reductase MsrB from Mycoplasma genitalium (strain ATCC 33530 / DSM 19775 / NCTC 10195 / G37) (Mycoplasmoides genitalium).